We begin with the raw amino-acid sequence, 326 residues long: Undecaprenyl-phosphate 4-deoxy-4-formamido-L-arabinose transferase (326 aa).

Residues 1–235 are Cytoplasmic-facing; it reads MFEIHPIKKV…TCLTTTPLRM (235 aa). The chain crosses the membrane as a helical span at residues 236-256; it reads LSLLGSIIATSGFSLAILLVV. Residues 257-269 lie on the Periplasmic side of the membrane; sequence LRLAFGSQWSGEG. The chain crosses the membrane as a helical span at residues 270 to 290; that stretch reads VFMLFAVLFTFIGAQFIGMGL. The Cytoplasmic segment spans residues 291-326; that stretch reads LGEYIGRIYNDVRARPRYFVQKVIRPASSIDIEENH.

It belongs to the glycosyltransferase 2 family.

The protein localises to the cell inner membrane. The catalysed reaction is UDP-4-deoxy-4-formamido-beta-L-arabinose + di-trans,octa-cis-undecaprenyl phosphate = 4-deoxy-4-formamido-alpha-L-arabinopyranosyl di-trans,octa-cis-undecaprenyl phosphate + UDP. Its pathway is glycolipid biosynthesis; 4-amino-4-deoxy-alpha-L-arabinose undecaprenyl phosphate biosynthesis; 4-amino-4-deoxy-alpha-L-arabinose undecaprenyl phosphate from UDP-4-deoxy-4-formamido-beta-L-arabinose and undecaprenyl phosphate: step 1/2. It participates in bacterial outer membrane biogenesis; lipopolysaccharide biosynthesis. In terms of biological role, catalyzes the transfer of 4-deoxy-4-formamido-L-arabinose from UDP to undecaprenyl phosphate. The modified arabinose is attached to lipid A and is required for resistance to polymyxin and cationic antimicrobial peptides. This is Undecaprenyl-phosphate 4-deoxy-4-formamido-L-arabinose transferase from Escherichia fergusonii (strain ATCC 35469 / DSM 13698 / CCUG 18766 / IAM 14443 / JCM 21226 / LMG 7866 / NBRC 102419 / NCTC 12128 / CDC 0568-73).